Reading from the N-terminus, the 496-residue chain is Probable cytosol aminopeptidase (496 aa).

K258 and D263 together coordinate Mn(2+). K270 is an active-site residue. Residues D281, D340, and E342 each contribute to the Mn(2+) site. Residue R344 is part of the active site.

It belongs to the peptidase M17 family. It depends on Mn(2+) as a cofactor.

Its subcellular location is the cytoplasm. It catalyses the reaction Release of an N-terminal amino acid, Xaa-|-Yaa-, in which Xaa is preferably Leu, but may be other amino acids including Pro although not Arg or Lys, and Yaa may be Pro. Amino acid amides and methyl esters are also readily hydrolyzed, but rates on arylamides are exceedingly low.. The catalysed reaction is Release of an N-terminal amino acid, preferentially leucine, but not glutamic or aspartic acids.. Functionally, presumably involved in the processing and regular turnover of intracellular proteins. Catalyzes the removal of unsubstituted N-terminal amino acids from various peptides. This chain is Probable cytosol aminopeptidase, found in Helicobacter pylori (strain G27).